We begin with the raw amino-acid sequence, 183 residues long: Putative 3-methyladenine DNA glycosylase (183 aa).

The protein belongs to the DNA glycosylase MPG family.

The sequence is that of Putative 3-methyladenine DNA glycosylase from Legionella pneumophila subsp. pneumophila (strain Philadelphia 1 / ATCC 33152 / DSM 7513).